The following is a 154-amino-acid chain: Myoglobin (154 aa).

Residues 2–148 (VLSDAEWHLV…FRKDIAAKYK (147 aa)) form the Globin domain. Serine 4 carries the post-translational modification Phosphoserine. Residue histidine 65 participates in nitrite binding. Histidine 65 contributes to the O2 binding site. Position 68 is a phosphothreonine (threonine 68). Histidine 94 lines the heme b pocket.

This sequence belongs to the globin family. As to quaternary structure, monomeric.

Its subcellular location is the cytoplasm. It localises to the sarcoplasm. It carries out the reaction Fe(III)-heme b-[protein] + nitric oxide + H2O = Fe(II)-heme b-[protein] + nitrite + 2 H(+). The catalysed reaction is H2O2 + AH2 = A + 2 H2O. Its function is as follows. Monomeric heme protein which primary function is to store oxygen and facilitate its diffusion within muscle tissues. Reversibly binds oxygen through a pentacoordinated heme iron and enables its timely and efficient release as needed during periods of heightened demand. Depending on the oxidative conditions of tissues and cells, and in addition to its ability to bind oxygen, it also has a nitrite reductase activity whereby it regulates the production of bioactive nitric oxide. Under stress conditions, like hypoxia and anoxia, it also protects cells against reactive oxygen species thanks to its pseudoperoxidase activity. The polypeptide is Myoglobin (MB) (Balaenoptera acutorostrata (Common minke whale)).